Here is a 283-residue protein sequence, read N- to C-terminus: MMRILLFLATNMAVMLVLGIILSVTGIAGNSTGGILIMALLFGFAGSLISLFLSKTMALRSVDGEVITQPRNQTERWLIDTVSRQAQKAGIPMPDVAIYHSPDVNAFATGATKSNSLVAVSTGLLNNMTEAEAEAVLAHEISHISNGDMVTMALLQGVLNTFVIFLSRVIATAVASSRNNNGEETRSSGIYFLVSMVLEMLFGVLASIIAMWFSRYREFRADAGSASLVGKEKMIMALQRLQQLHEPQNLEGSLNAFMINGKRSELFMSHPPLEKRIEALRNL.

Transmembrane regions (helical) follow at residues 4-24 and 33-53; these read ILLFLATNMAVMLVLGIILSV and GGILIMALLFGFAGSLISLFL. His139 serves as a coordination point for Zn(2+). The active site involves Glu140. Position 143 (His143) interacts with Zn(2+). 2 consecutive transmembrane segments (helical) span residues 147 to 167 and 190 to 210; these read GDMVTMALLQGVLNTFVIFLS and IYFLVSMVLEMLFGVLASIIA. Residue Glu218 coordinates Zn(2+).

The protein belongs to the peptidase M48B family. Zn(2+) is required as a cofactor.

It is found in the cell inner membrane. In Haemophilus influenzae (strain PittGG), this protein is Protease HtpX.